The following is a 457-amino-acid chain: Probable xyloglucan 6-xylosyltransferase 5 (457 aa).

Residues 1–40 (MGQDGSPAHKRPSGSGGGLPTTTLTNGGGRGGRGGLLPRG) form a disordered region. The Cytoplasmic segment spans residues 1–51 (MGQDGSPAHKRPSGSGGGLPTTTLTNGGGRGGRGGLLPRGRQMQKTFNNIK). The segment covering 26–37 (NGGGRGGRGGLL) has biased composition (gly residues). The chain crosses the membrane as a helical; Signal-anchor for type II membrane protein span at residues 52–72 (ITILCGFVTILVLRGTIGVGN). Over 73-457 (LGSSSADAVN…RTPVETKPQN (385 aa)) the chain is Lumenal. The interval 97–116 (RSDSDPTDLDEPQEGDMNPN) is disordered. Residues 101-110 (DPTDLDEPQE) are compositionally biased toward acidic residues. Asn116 and Asn432 each carry an N-linked (GlcNAc...) asparagine glycan.

Belongs to the glycosyltransferase 34 family. As to quaternary structure, interacts with XXT2 and CSLC4. Interacts with FUT1 and XLT2. Highly expressed in roots, stems and cauline leaves, and at lower levels in rosette leaves, flowers and siliques.

The protein localises to the golgi apparatus membrane. It catalyses the reaction Transfers an alpha-D-xylosyl residue from UDP-D-xylose to a glucose residue in xyloglucan, forming an alpha-(1-&gt;6)-D-xylosyl-D-glucose linkage.. Functionally, probable xyloglucan xylosyltransferase involved in the biosynthesis of xyloglucan in roots. May act in association with XXT1 and XXT2. Associates with other xyloglucan-synthesizing enzymes to form multiprotein complexes for xyloglucan synthesis in the Golgi. The protein is Probable xyloglucan 6-xylosyltransferase 5 of Arabidopsis thaliana (Mouse-ear cress).